A 298-amino-acid chain; its full sequence is Probable phosphite transport system-binding protein HtxB (298 aa).

Residues 1-33 (MQVFTLFSKFKKALTRAILAFIATIIVCTPAQA) form the signal peptide.

Belongs to the phosphate/phosphite/phosphonate binding protein family.

Probably forms part of a binding-protein-dependent hypophosphite transporter. In Stutzerimonas stutzeri (Pseudomonas stutzeri), this protein is Probable phosphite transport system-binding protein HtxB (htxB).